Here is a 141-residue protein sequence, read N- to C-terminus: Large ribosomal subunit protein uL16 (141 aa).

A compositionally biased stretch (basic residues) spans 1 to 17 (MLMPKRTKFRKQMKGRN). Positions 1 to 22 (MLMPKRTKFRKQMKGRNRGYAT) are disordered.

It belongs to the universal ribosomal protein uL16 family. As to quaternary structure, part of the 50S ribosomal subunit.

Its function is as follows. Binds 23S rRNA and is also seen to make contacts with the A and possibly P site tRNAs. The sequence is that of Large ribosomal subunit protein uL16 from Campylobacter curvus (strain 525.92).